A 428-amino-acid chain; its full sequence is AP-1 complex subunit mu-1 (428 aa).

Residues 170-426 (KNEVFLDVIE…ITMAGEYELR (257 aa)) enclose the MHD domain.

The protein belongs to the adaptor complexes medium subunit family. In terms of assembly, adaptor protein complex 1 (AP-1) is a heterotetramer composed of two large adaptins (gamma-type subunit and beta-type subunit), a medium adaptin (mu-type subunit) and a small adaptin (sigma-type subunit).

The protein resides in the golgi apparatus. It localises to the cytoplasmic vesicle. The protein localises to the clathrin-coated vesicle membrane. In terms of biological role, subunit of clathrin-associated adaptor protein complex 1 that plays a role in protein sorting at the trans-Golgi network and early endosomes (TGN/EE). The AP complexes mediate the recruitment of clathrin to membranes and the recognition of sorting signals within the cytosolic tails of transmembrane cargo molecules. Functions redundantly with AP1M2 in multiple post-Golgi trafficking pathways leading from the TGN to the vacuole, the plasma membrane, and the cell-division plane. The polypeptide is AP-1 complex subunit mu-1 (AP1M1) (Arabidopsis thaliana (Mouse-ear cress)).